The chain runs to 777 residues: Dynamin-like protein ARC5 (777 aa).

The 299-residue stretch at 45-343 (PFEAPAVLVV…LWKRYKESVP (299 aa)) folds into the Dynamin-type G domain. The G1 motif stretch occupies residues 55–62 (GQQTDGKS). Position 55–62 (55–62 (GQQTDGKS)) interacts with GTP. A G2 motif region spans residues 81-83 (KTR). Residues 160-163 (DTPG) form a G3 motif region. GTP is bound by residues 160-164 (DTPGL) and 231-234 (TKLD). Residues 231–234 (TKLD) form a G4 motif region. Positions 265–268 (SPFF) are G5 motif. Coiled coils occupy residues 300–320 (EDIASLEKKLGRLLTKQEKSR) and 728–765 (NLRQSLDQKKRSTEIELRRIKRIKEKFRVMNEKLNSHE).

Belongs to the TRAFAC class dynamin-like GTPase superfamily. Dynamin/Fzo/YdjA family. In terms of assembly, forms a homodimer and heterodimers with DRP3A and DRP3B on peroxisomes. Also interacts with FIS1A (but not FIS1B) and PEX11 proteins (PEX11A, PEX11B, PEX11C, PEX11D and PEX11E) on peroxisomes. Interacts with PDV1 and PDV2. Post-translationally, stabilized at the plastid outer envelope membranes (OEMs) in the constriction site when in complex with GTP, but destabilized after conversion of GTP into GDP leading to turnover with a cytosolic pool.

Its subcellular location is the cytoplasm. It is found in the plastid. It localises to the chloroplast outer membrane. The protein localises to the peroxisome. The protein resides in the cytosol. The enzyme catalyses GTP + H2O = GDP + phosphate + H(+). With respect to regulation, GTPase activity is repressed by PDV2 thus increasing stability at the plastid outer envelope membranes (OEMs) periphery. Mechanochemical GTPase component of both plastid and peroxisome division machinery. Required for the last steps of plastid division specifically in mesophyll-cell, when the narrow isthmus breaks, facilitating the separation of the daughter plastids. Necessary for peroxisome activities. Seems to influence stromule (stroma-filled tubular extensions of the plastid envelope membrane) length and frequency. The protein is Dynamin-like protein ARC5 of Arabidopsis thaliana (Mouse-ear cress).